A 400-amino-acid polypeptide reads, in one-letter code: Phosphoglycerate kinase (400 aa).

Substrate-binding positions include 21–23 (DFN), Arg37, 60–63 (HLGR), Arg121, and Arg154. ATP-binding positions include Lys204, Glu326, and 355-358 (GGDS).

Belongs to the phosphoglycerate kinase family. In terms of assembly, monomer.

It is found in the cytoplasm. It carries out the reaction (2R)-3-phosphoglycerate + ATP = (2R)-3-phospho-glyceroyl phosphate + ADP. It functions in the pathway carbohydrate degradation; glycolysis; pyruvate from D-glyceraldehyde 3-phosphate: step 2/5. This is Phosphoglycerate kinase from Chloroflexus aggregans (strain MD-66 / DSM 9485).